Consider the following 374-residue polypeptide: Alcohol dehydrogenase class-3 (374 aa).

At alanine 2 the chain carries N-acetylalanine. Positions 45, 67, 97, 100, 103, 111, and 174 each coordinate Zn(2+). Lysine 233 carries the N6-succinyllysine modification. The residue at position 247 (serine 247) is a Phosphoserine. N6-succinyllysine is present on lysine 315. Residues serine 324 and serine 351 each carry the phosphoserine modification.

The protein belongs to the zinc-containing alcohol dehydrogenase family. Class-III subfamily. In terms of assembly, homodimer. Zn(2+) serves as cofactor.

It is found in the cytoplasm. It catalyses the reaction a primary alcohol + NAD(+) = an aldehyde + NADH + H(+). It carries out the reaction a secondary alcohol + NAD(+) = a ketone + NADH + H(+). The catalysed reaction is S-(hydroxymethyl)glutathione + NADP(+) = S-formylglutathione + NADPH + H(+). The enzyme catalyses S-(hydroxymethyl)glutathione + NAD(+) = S-formylglutathione + NADH + H(+). It catalyses the reaction 20-oxo-(5Z,8Z,11Z,14Z)-eicosatetraenoate + NAD(+) + H2O = (5Z,8Z,11Z,14Z)-eicosatetraenedioate + NADH + 2 H(+). It carries out the reaction 20-hydroxy-(5Z,8Z,11Z,14Z)-eicosatetraenoate + NAD(+) = 20-oxo-(5Z,8Z,11Z,14Z)-eicosatetraenoate + NADH + H(+). The catalysed reaction is S-nitrosoglutathione + NADH + H(+) = S-(hydroxysulfenamide)glutathione + NAD(+). Catalyzes the oxidation of long-chain primary alcohols and the oxidation of S-(hydroxymethyl) glutathione. Also oxidizes long chain omega-hydroxy fatty acids, such as 20-HETE, producing both the intermediate aldehyde, 20-oxoarachidonate and the end product, a dicarboxylic acid, (5Z,8Z,11Z,14Z)-eicosatetraenedioate. Class-III ADH is remarkably ineffective in oxidizing ethanol. Required for clearance of cellular formaldehyde, a cytotoxic and carcinogenic metabolite that induces DNA damage. Also acts as a S-nitroso-glutathione reductase by catalyzing the NADH-dependent reduction of S-nitrosoglutathione, thereby regulating protein S-nitrosylation. This chain is Alcohol dehydrogenase class-3, found in Oryctolagus cuniculus (Rabbit).